Reading from the N-terminus, the 231-residue chain is Large ribosomal subunit protein uL1 (231 aa).

It belongs to the universal ribosomal protein uL1 family. In terms of assembly, part of the 50S ribosomal subunit.

Functionally, binds directly to 23S rRNA. The L1 stalk is quite mobile in the ribosome, and is involved in E site tRNA release. Its function is as follows. Protein L1 is also a translational repressor protein, it controls the translation of the L11 operon by binding to its mRNA. The protein is Large ribosomal subunit protein uL1 of Acidovorax ebreus (strain TPSY) (Diaphorobacter sp. (strain TPSY)).